Consider the following 69-residue polypeptide: Conotoxin Lt5.10 (69 aa).

Residues 1–19 (MLCLPVFIILLLLASPAAP) form the signal peptide. The propeptide occupies 20-54 (KSLETRIQNDLIRAGLTDADLKTEKGFLSGLLNVA).

It belongs to the conotoxin T superfamily. In terms of processing, contains 2 disulfide bonds that can be either 'C1-C3, C2-C4' or 'C1-C4, C2-C3', since these disulfide connectivities have been observed for conotoxins with cysteine framework V (for examples, see AC P0DQQ7 and AC P81755). As to expression, expressed by the venom duct.

The protein localises to the secreted. The protein is Conotoxin Lt5.10 of Conus litteratus (Lettered cone).